A 118-amino-acid polypeptide reads, in one-letter code: Protein MGF 110-6L (118 aa).

Positions 1 to 18 (MLVIFLGILGLLASQVSS) are cleaved as a signal peptide. N-linked (GlcNAc...) asparagine; by host glycosylation is present at asparagine 96. Positions 115-118 (KDEL) match the Prevents secretion from ER motif.

Belongs to the asfivirus MGF 110 family. Post-translationally, N-glycosylated.

Its subcellular location is the host endoplasmic reticulum lumen. Its function is as follows. Plays a role in virus cell tropism, and may be required for efficient virus replication in macrophages. In African swine fever virus (strain Badajoz 1971 Vero-adapted) (Ba71V), this protein is Protein MGF 110-6L.